We begin with the raw amino-acid sequence, 348 residues long: NADH-ubiquinone oxidoreductase chain 2 (348 aa).

11 consecutive transmembrane segments (helical) span residues 1 to 21 (MMTLILILGIFLGTMTTMFSS), 23 to 43 (WFFAWLGLEINMMAIIPMMLF), 56 to 76 (YFISQAVASSTIILASSWNYF), 92 to 112 (ITLIILALLLKLGLAPLHFWL), 123 to 143 (MGLIISTWQKLAPLTLLIQVS), 148 to 168 (NMYILISISVMSVLAGGFGGL), 176 to 196 (LLAYSSISHMGWIVGVMAVSA), 198 to 218 (LSWVTTVIYLIINFSIFTILI), 242 to 262 (CILVLLSLGGLPPFTGFFLKL), 272 to 292 (SLILMTILLMAGSLISLFFYL), and 321 to 341 (LLFNLMFLFSILLLPLSPFMI).

This sequence belongs to the complex I subunit 2 family.

The protein resides in the mitochondrion inner membrane. The catalysed reaction is a ubiquinone + NADH + 5 H(+)(in) = a ubiquinol + NAD(+) + 4 H(+)(out). In terms of biological role, core subunit of the mitochondrial membrane respiratory chain NADH dehydrogenase (Complex I) that is believed to belong to the minimal assembly required for catalysis. Complex I functions in the transfer of electrons from NADH to the respiratory chain. The immediate electron acceptor for the enzyme is believed to be ubiquinone. This is NADH-ubiquinone oxidoreductase chain 2 (MT-ND2) from Myxine glutinosa (Atlantic hagfish).